Reading from the N-terminus, the 336-residue chain is Holliday junction branch migration complex subunit RuvB (336 aa).

A large ATPase domain (RuvB-L) region spans residues 4–184 (ADRLIQPQVI…FGIPLRLEFY (181 aa)). ATP is bound by residues Arg-24, Gly-65, Lys-68, Thr-69, Thr-70, 131–133 (EDY), Arg-174, Tyr-184, and Arg-221. Thr-69 is a binding site for Mg(2+). The tract at residues 185–255 (NIKDLSTIVI…VAELALDMLD (71 aa)) is small ATPAse domain (RuvB-S). The head domain (RuvB-H) stretch occupies residues 258 to 336 (AEGFDYMDRK…HFNLIQPEAK (79 aa)). DNA contacts are provided by Arg-294, Arg-313, and Arg-318.

The protein belongs to the RuvB family. In terms of assembly, homohexamer. Forms an RuvA(8)-RuvB(12)-Holliday junction (HJ) complex. HJ DNA is sandwiched between 2 RuvA tetramers; dsDNA enters through RuvA and exits via RuvB. An RuvB hexamer assembles on each DNA strand where it exits the tetramer. Each RuvB hexamer is contacted by two RuvA subunits (via domain III) on 2 adjacent RuvB subunits; this complex drives branch migration. In the full resolvosome a probable DNA-RuvA(4)-RuvB(12)-RuvC(2) complex forms which resolves the HJ.

It localises to the cytoplasm. The enzyme catalyses ATP + H2O = ADP + phosphate + H(+). Its function is as follows. The RuvA-RuvB-RuvC complex processes Holliday junction (HJ) DNA during genetic recombination and DNA repair, while the RuvA-RuvB complex plays an important role in the rescue of blocked DNA replication forks via replication fork reversal (RFR). RuvA specifically binds to HJ cruciform DNA, conferring on it an open structure. The RuvB hexamer acts as an ATP-dependent pump, pulling dsDNA into and through the RuvAB complex. RuvB forms 2 homohexamers on either side of HJ DNA bound by 1 or 2 RuvA tetramers; 4 subunits per hexamer contact DNA at a time. Coordinated motions by a converter formed by DNA-disengaged RuvB subunits stimulates ATP hydrolysis and nucleotide exchange. Immobilization of the converter enables RuvB to convert the ATP-contained energy into a lever motion, pulling 2 nucleotides of DNA out of the RuvA tetramer per ATP hydrolyzed, thus driving DNA branch migration. The RuvB motors rotate together with the DNA substrate, which together with the progressing nucleotide cycle form the mechanistic basis for DNA recombination by continuous HJ branch migration. Branch migration allows RuvC to scan DNA until it finds its consensus sequence, where it cleaves and resolves cruciform DNA. This Shewanella piezotolerans (strain WP3 / JCM 13877) protein is Holliday junction branch migration complex subunit RuvB.